A 266-amino-acid polypeptide reads, in one-letter code: Regulatory protein RecX (266 aa).

This sequence belongs to the RecX family.

The protein localises to the cytoplasm. Its function is as follows. Modulates RecA activity. The protein is Regulatory protein RecX of Enterococcus faecalis (strain ATCC 700802 / V583).